The chain runs to 625 residues: DELLA protein SLR1 (625 aa).

The segment at 1–34 (MKREYQEAGGSSGGGSSADMGSCKDKVMAGAAGE) is disordered. The short motif at 39 to 43 (DELLA) is the DELLA motif element. The segment at 167–209 (TADPSAADSARDTKRMRTGGGSTSSSSSSSSSLGGGASRGSVV) is disordered. Residues 189-198 (TSSSSSSSSS) are compositionally biased toward low complexity. A GRAS domain is found at 232 to 621 (VDTQEAGIRL…RPLIATSAWR (390 aa)). The tract at residues 239–294 (IRLVHALLACAEAVQQENFAAAEALVKQIPTLAASQGGAMRKVAAYFGEALARRVY) is leucine repeat I (LRI). The segment at 241–278 (LVHALLACAEAVQQENFAAAEALVKQIPTLAASQGGAM) is required for possible homodimerization. Positions 246–250 (LACAE) match the LxCxE motif motif. The VHIID stretch occupies residues 313 to 378 (HAHFYESCPY…GGPPSFRLTG (66 aa)). The VHIID signature appears at 344–348 (VHVVD). The leucine repeat II (LRII) stretch occupies residues 392–431 (QVGWKLAQFAHTIRVDFQYRGLVAATLADLEPFMLQPEGE). Residues 441–542 (IAVNSVFELH…EVYLGRQICN (102 aa)) form a PFYRE region. An LXXLL motif motif is present at residues 449 to 453 (LHRLL). The tract at residues 545–621 (ACEGAERTER…RPLIATSAWR (77 aa)) is SAW.

It belongs to the GRAS family. DELLA subfamily. As to quaternary structure, may be a homodimer. Interacts directly with the GID2 component of the SCF(GID2) complex. Interacts with GID1 in a GA-dependent manner, probably leading to its interaction with GID2 and its subsequent degradation. Interacts with D14 and GID1 in an strigolactone-dependent manner. Interacts with HD16/EL1. In terms of processing, phosphorylated on Ser/Thr residues in the N-terminal part. Both phosphorylated and unphosphorylated forms are degraded upon GA treatment, suggesting that phosphorylation does not trigger ubiquitination. Phosphorylated by HD16/EL1. Phosphorylation enhances its stability. Ubiquitinated. Upon GA application it is ubiquitinated by the SCF(GID2) complex, leading to its subsequent degradation. As to expression, expressed in nodes, internodes, leaf sheats of young seedlings and ears of adult plants. Weakly expressed in leaf blade and root.

It localises to the nucleus. Its function is as follows. Probable transcriptional regulator that acts as a repressor of the gibberellin (GA) signaling pathway. Probably acts by participating in large multiprotein complexes that repress transcription of GA-inducible genes. Upon GA application, it is degraded by the proteasome, allowing the GA signaling pathway. In contrast, its overexpression prevents the GA signaling pathway and induces a dwarf phenotype. This is DELLA protein SLR1 from Oryza sativa subsp. japonica (Rice).